Consider the following 484-residue polypeptide: Probable endopeptidase p60 (484 aa).

The first 27 residues, 1–27 (MNMKKATIAATAGIAVTAFAAPTIASA), serve as a signal peptide directing secretion. The 44-residue stretch at 28 to 71 (STVVVEAGDTLWGIAQSKGTTVDAIKKANNLTTDKIVPGQKLQV) folds into the LysM 1 domain. Residues 80-144 (KTEKSVSATW…VNGKYLTDKA (65 aa)) form the SH3b domain. Residues 150 to 192 (APTQEVKKETTTQQAAPAAETKTEVKQTTQATTPAPKVAETKE) are disordered. The span at 160–169 (TTQQAAPAAE) shows a compositional bias: low complexity. The LysM 2 domain maps to 201–244 (TTHAVKSGDTIWALSVKYGVSVQDIMSWNNLSSSSIYVGQKLAI). The disordered stretch occupies residues 254–367 (KAEVKTEAPA…QGSSNNNSNS (114 aa)). Composition is skewed to low complexity over residues 273–282 (KENTNTNTAT) and 289–367 (ATQQ…NSNS). The interval 311-355 (TNTNANKTNTNTNTNTNTNNTNTNTPSKNTNTNSNTNTNTNSNTN) is 19 X 2 AA tandem repeats of T-N. A NlpC/P60 domain is found at 366-484 (NSSASAIIAE…GKYLVGFGRV (119 aa)). The Nucleophile role is filled by cysteine 396. The Proton acceptor role is filled by histidine 446. Asparagine 458 is an active-site residue.

The protein belongs to the peptidase C40 family.

The protein resides in the cell surface. It localises to the secreted. Functionally, this major extracellular protein may be involved in the invasion of non-professional phagocytic cells by Listeria. The chain is Probable endopeptidase p60 (iap) from Listeria monocytogenes serovar 1/2a (strain ATCC BAA-679 / EGD-e).